The following is a 210-amino-acid chain: Keratin-associated protein 4-9 (210 aa).

28 tandem repeats follow at residues 24-28 (CCRPS), 29-33 (CCETT), 34-38 (CCRTT), 39-43 (CCRPS), 44-48 (CCVSS), 49-53 (CCRPQ), 54-58 (CCQSV), 59-63 (CCQPT), 69-73 (CCQTT), 74-78 (CCRTT), 84-88 (CCVSS), 89-93 (CCRPQ), 94-98 (CCQPA), 99-103 (CCQPT), 104-108 (CCRPS), 109-113 (CCETT), 114-118 (CCHPR), 119-123 (CCISS), 124-128 (CCRPS), 129-133 (CCVSS), 134-138 (CCKPQ), 139-143 (CCQSV), 144-148 (CCQPN), 149-153 (CCRPS), 159-163 (CCRPS), 164-168 (CCESS), 169-173 (CCRPC), and 174-178 (CCVRP). The interval 24–178 (CCRPSCCETT…CCRPCCCVRP (155 aa)) is 29 X 5 AA repeats of C-C-[RQVHIEK]-[SPTR]-[VSTQCRNP].

Belongs to the KRTAP type 4 family. As to quaternary structure, interacts with hair keratins. As to expression, expressed in the hair follicles.

In the hair cortex, hair keratin intermediate filaments are embedded in an interfilamentous matrix, consisting of hair keratin-associated proteins (KRTAP), which are essential for the formation of a rigid and resistant hair shaft through their extensive disulfide bond cross-linking with abundant cysteine residues of hair keratins. The matrix proteins include the high-sulfur and high-glycine-tyrosine keratins. The sequence is that of Keratin-associated protein 4-9 (KRTAP4-9) from Homo sapiens (Human).